The following is a 541-amino-acid chain: MQFKYGALIFSGFLGLSIVLASCGARGKFDQVDDGKIKLASSLTSRSASAALQKVVEKYNKVKGVNDYPIEITQIAGGYDGGRTDLQTRVSVKDKTSFYNMILNYPDLVSVLARNGMELPFDGVNVDKLSPNFLKFNERISGVAKKANYAIPISMSTDILILNAPVLHYILNSAKKNDGNTKVQVKAQSKDSQTKVKGTMEIGTDESTKNLWSDIQKKAGENGKATTEGTKKAAAKSTHLTLLTKSEQSTQGNNGASESDKKIEETWGTYSEVDGGLKNYTFKADVFDTWHGLIDFSTRVAKSFKNKVSDISTKKGTDIQGVLGLDSTPNALFTSVFAAGDSNFDNFFYKVKDGRADFSNFNENGTSYKNLEKVFNDYKKLTDSNGLFVNKGGSYTSNFQKFHQLAYSISSSSGYAYAFAGENSKRLKFNDDTFIEYPSFTQEIHAPGQSSQKEGGQQQSNSKDNGNLLGTFTIEAAKSKTKTEVKKTEDTQNQGKKAEGTPNQGKKAEGTENQGKTIFLYKTSIPNDKQDGVDAVLIKDK.

The N-terminal stretch at 1 to 22 is a signal peptide; that stretch reads MQFKYGALIFSGFLGLSIVLAS. A lipid anchor (N-palmitoyl cysteine) is attached at Cys-23. The S-diacylglycerol cysteine moiety is linked to residue Cys-23. Disordered regions lie at residues 446-468 and 480-514; these read APGQ…NGNL and KTKT…TENQ. Positions 448–460 are enriched in low complexity; it reads GQSSQKEGGQQQS. Residues 480-490 are compositionally biased toward basic and acidic residues; it reads KTKTEVKKTED.

It belongs to the MG185/MG260 family.

The protein resides in the cell membrane. This is an uncharacterized protein from Mycoplasma pneumoniae (strain ATCC 29342 / M129 / Subtype 1) (Mycoplasmoides pneumoniae).